We begin with the raw amino-acid sequence, 223 residues long: Kinetochore protein Spc25 (223 aa).

Positions 51 to 116 (RHQRKVGKLQ…QRKNEIMERI (66 aa)) form a coiled coil.

This sequence belongs to the SPC25 family. Component of the Ndc80 complex, which is composed of Ndc80, Nuf2 and Spc25.

It localises to the nucleus. The protein localises to the chromosome. It is found in the centromere. The protein resides in the kinetochore. Acts as a component of the essential kinetochore-associated Ndc80 complex, which is required for chromosome segregation and spindle checkpoint activity during meiosis and mitosis. Required for kinetochore integrity and the organization of stable microtubule binding sites in the outer plate of the kinetochore. Participates in SAC signaling that responds specifically to disruptions in spindle microtubule dynamics. The NDC80 complex synergistically enhances the affinity of the SKA1 complex for microtubules and may allow the NDC80 complex to track depolymerizing microtubules. This chain is Kinetochore protein Spc25, found in Drosophila yakuba (Fruit fly).